The chain runs to 345 residues: MMTRESIDKRAGRRGPNLNIVLTCPECKVYPPKIVERFSEGDVVCALCGLVLSDKLVDTRSEWRTFSNDDHNGDDPSRVGEASNPLLDGNNLSTRIGKGETTDMRFTKELNKAQGKNVMDKKDNEVQAAFAKITMLCDAAELPKIVKDCAKEAYKLCHDEKTLKGKSMESIMAASILIGCRRAEVARTFKEIQSLIHVKTKEFGKTLNIMKNILRGKSEDGFLKIDTDNMSGAQNLTYIPRFCSHLGLPMQVTTSAEYTAKKCKEIKEIAGKSPITIAVVSIYLNILLFQIPITAAKVGQTLQVTEGTIKSGYKILYEHRDKLVDPQLIANGVVSLDNLPGVEKK.

The TFIIB-type zinc finger occupies 20–53; it reads IVLTCPECKVYPPKIVERFSEGDVVCALCGLVLS. Zn(2+)-binding residues include Cys24, Cys27, Cys45, and Cys48. A compositionally biased stretch (basic and acidic residues) spans 65-78; the sequence is TFSNDDHNGDDPSR. Residues 65–93 are disordered; that stretch reads TFSNDDHNGDDPSRVGEASNPLLDGNNLS. A run of 2 repeats spans residues 136-212 and 242-318.

It belongs to the TFIIB family. As to quaternary structure, associates with TFIID-IIA (DA complex) to form TFIID-IIA-IIB (DAB-complex) which is then recognized by polymerase II.

The protein localises to the nucleus. General factor that plays a major role in the activation of eukaryotic genes transcribed by RNA polymerase II. The sequence is that of Transcription initiation factor IIB (SUA7) from Saccharomyces cerevisiae (strain ATCC 204508 / S288c) (Baker's yeast).